A 211-amino-acid chain; its full sequence is ATP phosphoribosyltransferase (211 aa).

It belongs to the ATP phosphoribosyltransferase family. Short subfamily. In terms of assembly, heteromultimer composed of HisG and HisZ subunits.

It is found in the cytoplasm. The catalysed reaction is 1-(5-phospho-beta-D-ribosyl)-ATP + diphosphate = 5-phospho-alpha-D-ribose 1-diphosphate + ATP. It functions in the pathway amino-acid biosynthesis; L-histidine biosynthesis; L-histidine from 5-phospho-alpha-D-ribose 1-diphosphate: step 1/9. Catalyzes the condensation of ATP and 5-phosphoribose 1-diphosphate to form N'-(5'-phosphoribosyl)-ATP (PR-ATP). Has a crucial role in the pathway because the rate of histidine biosynthesis seems to be controlled primarily by regulation of HisG enzymatic activity. The protein is ATP phosphoribosyltransferase of Clostridium botulinum (strain 657 / Type Ba4).